Here is a 99-residue protein sequence, read N- to C-terminus: Integration host factor subunit alpha (99 aa).

This sequence belongs to the bacterial histone-like protein family. Heterodimer of an alpha and a beta chain.

In terms of biological role, this protein is one of the two subunits of integration host factor, a specific DNA-binding protein that functions in genetic recombination as well as in transcriptional and translational control. The protein is Integration host factor subunit alpha (ihfA) of Xylella fastidiosa (strain 9a5c).